The following is a 765-amino-acid chain: Phosphoribosylformylglycinamidine synthase subunit PurL (765 aa).

Polar residues predominate over residues 1 to 13; that stretch reads MTVSPTSAPTQAI. The interval 1–32 is disordered; it reads MTVSPTSAPTQAIDTVERAATTPDEPQPFGEL. Residue His-65 is part of the active site. Positions 68 and 112 each coordinate ATP. Residue Glu-114 coordinates Mg(2+). Substrate contacts are provided by residues 115–118 and Arg-137; that span reads SHNH. His-116 functions as the Proton acceptor in the catalytic mechanism. Asp-138 contacts Mg(2+). Gln-263 serves as a coordination point for substrate. Asp-291 contacts Mg(2+). 335-337 lines the substrate pocket; it reads ESQ. Residues Asn-523 and Gly-560 each coordinate ATP. Asn-561 is a Mg(2+) binding site. Residue Ser-563 coordinates substrate.

It belongs to the FGAMS family. Monomer. Part of the FGAM synthase complex composed of 1 PurL, 1 PurQ and 2 PurS subunits.

The protein resides in the cytoplasm. It catalyses the reaction N(2)-formyl-N(1)-(5-phospho-beta-D-ribosyl)glycinamide + L-glutamine + ATP + H2O = 2-formamido-N(1)-(5-O-phospho-beta-D-ribosyl)acetamidine + L-glutamate + ADP + phosphate + H(+). It functions in the pathway purine metabolism; IMP biosynthesis via de novo pathway; 5-amino-1-(5-phospho-D-ribosyl)imidazole from N(2)-formyl-N(1)-(5-phospho-D-ribosyl)glycinamide: step 1/2. In terms of biological role, part of the phosphoribosylformylglycinamidine synthase complex involved in the purines biosynthetic pathway. Catalyzes the ATP-dependent conversion of formylglycinamide ribonucleotide (FGAR) and glutamine to yield formylglycinamidine ribonucleotide (FGAM) and glutamate. The FGAM synthase complex is composed of three subunits. PurQ produces an ammonia molecule by converting glutamine to glutamate. PurL transfers the ammonia molecule to FGAR to form FGAM in an ATP-dependent manner. PurS interacts with PurQ and PurL and is thought to assist in the transfer of the ammonia molecule from PurQ to PurL. This is Phosphoribosylformylglycinamidine synthase subunit PurL from Mycobacterium avium (strain 104).